The following is a 187-amino-acid chain: Protein GrpE (187 aa).

Basic and acidic residues predominate over residues 1-11 (MTDSSNEHETE). The tract at residues 1–21 (MTDSSNEHETENPSLPIPDNE) is disordered.

This sequence belongs to the GrpE family. Homodimer.

It localises to the cytoplasm. Participates actively in the response to hyperosmotic and heat shock by preventing the aggregation of stress-denatured proteins, in association with DnaK and GrpE. It is the nucleotide exchange factor for DnaK and may function as a thermosensor. Unfolded proteins bind initially to DnaJ; upon interaction with the DnaJ-bound protein, DnaK hydrolyzes its bound ATP, resulting in the formation of a stable complex. GrpE releases ADP from DnaK; ATP binding to DnaK triggers the release of the substrate protein, thus completing the reaction cycle. Several rounds of ATP-dependent interactions between DnaJ, DnaK and GrpE are required for fully efficient folding. The sequence is that of Protein GrpE from Chlamydia caviae (strain ATCC VR-813 / DSM 19441 / 03DC25 / GPIC) (Chlamydophila caviae).